The following is a 447-amino-acid chain: Tubulin beta-5 chain (447 aa).

The GTP site is built by Q11, E69, S138, G142, T143, G144, N204, and N226. E69 provides a ligand contact to Mg(2+). A disordered region spans residues Q424–G447. The segment covering T429 to G447 has biased composition (acidic residues).

The protein belongs to the tubulin family. Dimer of alpha and beta chains. A typical microtubule is a hollow water-filled tube with an outer diameter of 25 nm and an inner diameter of 15 nM. Alpha-beta heterodimers associate head-to-tail to form protofilaments running lengthwise along the microtubule wall with the beta-tubulin subunit facing the microtubule plus end conferring a structural polarity. Microtubules usually have 13 protofilaments but different protofilament numbers can be found in some organisms and specialized cells. The cofactor is Mg(2+).

The protein localises to the cytoplasm. The protein resides in the cytoskeleton. In terms of biological role, tubulin is the major constituent of microtubules, a cylinder consisting of laterally associated linear protofilaments composed of alpha- and beta-tubulin heterodimers. Microtubules grow by the addition of GTP-tubulin dimers to the microtubule end, where a stabilizing cap forms. Below the cap, tubulin dimers are in GDP-bound state, owing to GTPase activity of alpha-tubulin. The sequence is that of Tubulin beta-5 chain (TUBB5) from Ectocarpus variabilis (Brown alga).